Reading from the N-terminus, the 858-residue chain is DNA mismatch repair protein MutS (858 aa).

600–607 (GPNMSGKS) serves as a coordination point for ATP. The segment at 803–823 (EAASDEVDDNNSENSPMTDAE) is disordered.

The protein belongs to the DNA mismatch repair MutS family.

In terms of biological role, this protein is involved in the repair of mismatches in DNA. It is possible that it carries out the mismatch recognition step. This protein has a weak ATPase activity. This Lactobacillus helveticus (strain DPC 4571) protein is DNA mismatch repair protein MutS.